The following is a 224-amino-acid chain: Homeobox protein Hox-B6 (224 aa).

The short motif at 127 to 132 (VYPWMQ) is the Antp-type hexapeptide element. The segment at residues 146–205 (GRRGRQTYTRYQTLELEKEFHYNRYLTRRRRIEIAHALCLTERQIKIWFQNRRMKWKKES) is a DNA-binding region (homeobox). Ser214 carries the post-translational modification Phosphoserine.

This sequence belongs to the Antp homeobox family.

The protein localises to the nucleus. Sequence-specific transcription factor which is part of a developmental regulatory system that provides cells with specific positional identities on the anterior-posterior axis. The chain is Homeobox protein Hox-B6 (Hoxb6) from Mus musculus (Mouse).